A 134-amino-acid polypeptide reads, in one-letter code: Cytochrome b5 (134 aa).

The residue at position 2 (A2) is an N-acetylalanine. An N6-acetyllysine mark is found at K7, K10, and K19. The Cytochrome b5 heme-binding domain maps to 9–85; the sequence is VKYYTLEEIK…SKTFIIGELH (77 aa). Heme is bound by residues H44 and H68. Residues 109–131 traverse the membrane as a helical segment; it reads WWTNWVIPAISALIVALMYRLYM.

This sequence belongs to the cytochrome b5 family.

It is found in the endoplasmic reticulum membrane. The protein localises to the microsome membrane. Cytochrome b5 is a membrane-bound hemoprotein functioning as an electron carrier for several membrane-bound oxygenases. This chain is Cytochrome b5 (CYB5A), found in Oryctolagus cuniculus (Rabbit).